Here is a 262-residue protein sequence, read N- to C-terminus: 5'-nucleotidase SurE (262 aa).

Residues Asp-11, Asp-12, Ser-43, and Asn-101 each coordinate a divalent metal cation.

Belongs to the SurE nucleotidase family. A divalent metal cation serves as cofactor.

Its subcellular location is the cytoplasm. It catalyses the reaction a ribonucleoside 5'-phosphate + H2O = a ribonucleoside + phosphate. Its function is as follows. Nucleotidase that shows phosphatase activity on nucleoside 5'-monophosphates. The protein is 5'-nucleotidase SurE of Prochlorococcus marinus (strain NATL2A).